A 103-amino-acid polypeptide reads, in one-letter code: ATP synthase F(0) complex subunit g, mitochondrial (103 aa).

Residue A2 is modified to N-acetylalanine. N6-acetyllysine is present on residues K11, K24, K35, and K54.

As to quaternary structure, component of the ATP synthase complex composed at least of ATP5F1A/subunit alpha, ATP5F1B/subunit beta, ATP5MC1/subunit c (homooctomer), MT-ATP6/subunit a, MT-ATP8/subunit 8, ATP5ME/subunit e, ATP5MF/subunit f, ATP5MG/subunit g, ATP5MK/subunit k, ATP5MJ/subunit j, ATP5F1C/subunit gamma, ATP5F1D/subunit delta, ATP5F1E/subunit epsilon, ATP5PF/subunit F6, ATP5PB/subunit b, ATP5PD/subunit d, ATP5PO/subunit OSCP. ATP synthase complex consists of a soluble F(1) head domain (subunits alpha(3) and beta(3)) - the catalytic core - and a membrane F(0) domain - the membrane proton channel (subunits c, a, 8, e, f, g, k and j). These two domains are linked by a central stalk (subunits gamma, delta, and epsilon) rotating inside the F1 region and a stationary peripheral stalk (subunits F6, b, d, and OSCP).

The protein localises to the mitochondrion. It localises to the mitochondrion inner membrane. Functionally, subunit g, of the mitochondrial membrane ATP synthase complex (F(1)F(0) ATP synthase or Complex V) that produces ATP from ADP in the presence of a proton gradient across the membrane which is generated by electron transport complexes of the respiratory chain. ATP synthase complex consist of a soluble F(1) head domain - the catalytic core - and a membrane F(1) domain - the membrane proton channel. These two domains are linked by a central stalk rotating inside the F(1) region and a stationary peripheral stalk. During catalysis, ATP synthesis in the catalytic domain of F(1) is coupled via a rotary mechanism of the central stalk subunits to proton translocation. In vivo, can only synthesize ATP although its ATP hydrolase activity can be activated artificially in vitro. Part of the complex F(0) domain. This Bos taurus (Bovine) protein is ATP synthase F(0) complex subunit g, mitochondrial.